We begin with the raw amino-acid sequence, 86 residues long: Acyl-CoA-binding protein homolog 1 (86 aa).

Residues 1-86 (MTLSFDDAAA…VEELIAKYGA (86 aa)) form the ACB domain. Residues Lys13, 28–32 (YALFK), Lys50, Lys54, and Tyr73 each bind an acyl-CoA.

It belongs to the ACBP family.

In terms of biological role, binds medium- and long-chain acyl-CoA esters with very high affinity and may function as an intracellular carrier of acyl-CoA esters. The chain is Acyl-CoA-binding protein homolog 1 (acbp-1) from Caenorhabditis elegans.